Here is a 426-residue protein sequence, read N- to C-terminus: uncharacterized protein (426 aa).

An N-terminal signal peptide occupies residues 1 to 23 (MKKFILFLIILLFSIYFLNVSSA).

This is an uncharacterized protein from Methanocaldococcus jannaschii (strain ATCC 43067 / DSM 2661 / JAL-1 / JCM 10045 / NBRC 100440) (Methanococcus jannaschii).